An 861-amino-acid chain; its full sequence is Cone cGMP-specific 3',5'-cyclic phosphodiesterase subunit alpha' (861 aa).

GAF domains follow at residues 75–224 (SAEQ…AVAL) and 256–433 (DVER…GWSL). 3',5'-cyclic GMP-binding positions include S97, N116, 169-172 (DKQT), and T176. In terms of domain architecture, PDEase spans 486-819 (EERQLLAILK…VEWKSLAEEY (334 aa)). Residue H562 is the Proton donor of the active site. Residues H566, H602, D603, and D723 each contribute to the a divalent metal cation site. Over residues 826-839 (TEEEAGKQEEEASD) the composition is skewed to basic and acidic residues. Positions 826 to 861 (TEEEAGKQEEEASDGKAATDLGGSAEDKKSKTCLML) are disordered. Position 858 is a cysteine methyl ester (C858). The S-geranylgeranyl cysteine moiety is linked to residue C858. Residues 859-861 (LML) constitute a propeptide, removed in mature form.

It belongs to the cyclic nucleotide phosphodiesterase family. Composed of two alpha' subunits that are associated with 3 smaller proteins of 11, 13, and 15 kDa. The cofactor is a divalent metal cation.

Its subcellular location is the cell membrane. The enzyme catalyses 3',5'-cyclic GMP + H2O = GMP + H(+). In terms of biological role, as cone-specific cGMP phosphodiesterase, it plays an essential role in light detection and cone phototransduction by rapidly decreasing intracellular levels of cGMP. This is Cone cGMP-specific 3',5'-cyclic phosphodiesterase subunit alpha' (Pde6c) from Mus musculus (Mouse).